The following is a 72-amino-acid chain: Conotoxin VnMKLT2-0221 (72 aa).

Positions 1–22 (MKLTCVLIVAVLFLTACQLTTA) are cleaved as a signal peptide. A propeptide spanning residues 23 to 45 (ASYARSERQHPDLGSSDQNSKLT) is cleaved from the precursor. A disordered region spans residues 26–45 (ARSERQHPDLGSSDQNSKLT). Disulfide bonds link C48–C62, C55–C66, and C61–C71.

Belongs to the conotoxin O1 superfamily. As to expression, expressed by the venom duct.

It localises to the secreted. This is Conotoxin VnMKLT2-0221 from Conus ventricosus (Mediterranean cone).